The chain runs to 212 residues: Molybdenum cofactor guanylyltransferase (212 aa).

GTP is bound by residues 14–16 (LAG), lysine 27, asparagine 55, aspartate 73, and aspartate 108. Aspartate 108 contributes to the Mg(2+) binding site.

Belongs to the MobA family. In terms of assembly, monomer. The cofactor is Mg(2+).

It is found in the cytoplasm. It catalyses the reaction Mo-molybdopterin + GTP + H(+) = Mo-molybdopterin guanine dinucleotide + diphosphate. In terms of biological role, transfers a GMP moiety from GTP to Mo-molybdopterin (Mo-MPT) cofactor (Moco or molybdenum cofactor) to form Mo-molybdopterin guanine dinucleotide (Mo-MGD) cofactor. The chain is Molybdenum cofactor guanylyltransferase from Bradyrhizobium sp. (strain ORS 278).